We begin with the raw amino-acid sequence, 181 residues long: Ribonuclease HII (181 aa).

The region spanning 1 to 181 (MICGIDEVGR…SLHRKSFQLI (181 aa)) is the RNase H type-2 domain. A divalent metal cation is bound by residues Asp6, Glu7, and Asp98.

This sequence belongs to the RNase HII family. Mn(2+) is required as a cofactor. It depends on Mg(2+) as a cofactor.

It localises to the cytoplasm. The catalysed reaction is Endonucleolytic cleavage to 5'-phosphomonoester.. Its function is as follows. Endonuclease that specifically degrades the RNA of RNA-DNA hybrids. The protein is Ribonuclease HII of Borrelia duttonii (strain Ly).